The primary structure comprises 310 residues: Tagatose-6-phosphate kinase (310 aa).

It belongs to the carbohydrate kinase PfkB family. LacC subfamily.

It carries out the reaction D-tagatofuranose 6-phosphate + ATP = D-tagatofuranose 1,6-bisphosphate + ADP + H(+). It functions in the pathway carbohydrate metabolism; D-tagatose 6-phosphate degradation; D-glyceraldehyde 3-phosphate and glycerone phosphate from D-tagatose 6-phosphate: step 1/2. The protein is Tagatose-6-phosphate kinase of Staphylococcus epidermidis (strain ATCC 12228 / FDA PCI 1200).